We begin with the raw amino-acid sequence, 957 residues long: Glycine dehydrogenase (decarboxylating) (957 aa).

Lys708 carries the N6-(pyridoxal phosphate)lysine modification.

The protein belongs to the GcvP family. In terms of assembly, the glycine cleavage system is composed of four proteins: P, T, L and H. Requires pyridoxal 5'-phosphate as cofactor.

It carries out the reaction N(6)-[(R)-lipoyl]-L-lysyl-[glycine-cleavage complex H protein] + glycine + H(+) = N(6)-[(R)-S(8)-aminomethyldihydrolipoyl]-L-lysyl-[glycine-cleavage complex H protein] + CO2. Its function is as follows. The glycine cleavage system catalyzes the degradation of glycine. The P protein binds the alpha-amino group of glycine through its pyridoxal phosphate cofactor; CO(2) is released and the remaining methylamine moiety is then transferred to the lipoamide cofactor of the H protein. The polypeptide is Glycine dehydrogenase (decarboxylating) (Salmonella agona (strain SL483)).